Consider the following 673-residue polypeptide: MNGVEVPAKIQKRIERLRQEINDHNYRYYVLSQPTIPDSVYDELFHELEKLEKKYPETITPSSPTQRVGAEPLKVFEPVHHEIPMLSLDNVFDEKGLRAFDKRIRQRLKLDKPFEYVCEPKMDGVALSLLYENGELIRAATRGDGYTGENVTQNTRTIASVPLQLRGNDYPELVEIRGEVLMPREGFAKFNREAEKRGDKTFANPRNAASGSLRQLDPRITAKRPLIFYGYLIGLLKGKDFPKNHCDVLKWFKDWGIPVISEIKVVGGIEGCLDYYEHLVKTREKMPFDIDGIVIKVNSLQVQAELGFVSRAPRWAIAYKFPAQEKMTVVKAIEFQVGRTGAVTPVARLEPVSVSGVTVSNATLHNFDELYRKDVRVGDTVIVRRAGDVIPEVVGPILAKRPKKAKLIKIPSRCPVCHAEVIKPEGEAVARCVGGLYCRAQLRESIKHFASRRALDIEGLGDKLVELFIQEKLIKDITGIYQLKKSAITALPRMGEKSAENLLTAIEKSKKTTLPRFLYALGIRGVGDTTARTLARHFHELDLLMKASIETLQEIRDIGPVAAENIHAFFHQKNNAELINKLIHLGVHWPQEKAVVKSEIAGKTFVLTGALKSLTREEAEEKIERSGGKATSSVSKNTDYVIVGENPGSKYEKAKALGISLIDEEAFLKLLKS.

Residues 38 to 42 (DSVYD), 87 to 88 (SL), and Glu-119 contribute to the NAD(+) site. Catalysis depends on Lys-121, which acts as the N6-AMP-lysine intermediate. 4 residues coordinate NAD(+): Arg-142, Glu-179, Lys-296, and Lys-320. Zn(2+) is bound by residues Cys-414, Cys-417, Cys-432, and Cys-438. The BRCT domain occupies 595–673 (VVKSEIAGKT…EEAFLKLLKS (79 aa)).

It belongs to the NAD-dependent DNA ligase family. LigA subfamily. It depends on Mg(2+) as a cofactor. Mn(2+) is required as a cofactor.

The enzyme catalyses NAD(+) + (deoxyribonucleotide)n-3'-hydroxyl + 5'-phospho-(deoxyribonucleotide)m = (deoxyribonucleotide)n+m + AMP + beta-nicotinamide D-nucleotide.. Its function is as follows. DNA ligase that catalyzes the formation of phosphodiester linkages between 5'-phosphoryl and 3'-hydroxyl groups in double-stranded DNA using NAD as a coenzyme and as the energy source for the reaction. It is essential for DNA replication and repair of damaged DNA. The sequence is that of DNA ligase from Coxiella burnetii (strain RSA 493 / Nine Mile phase I).